The chain runs to 139 residues: Cell division protein SepF (139 aa).

This sequence belongs to the SepF family. In terms of assembly, homodimer. Interacts with FtsZ.

Its subcellular location is the cytoplasm. In terms of biological role, cell division protein that is part of the divisome complex and is recruited early to the Z-ring. Probably stimulates Z-ring formation, perhaps through the cross-linking of FtsZ protofilaments. Its function overlaps with FtsA. This Coprothermobacter proteolyticus (strain ATCC 35245 / DSM 5265 / OCM 4 / BT) protein is Cell division protein SepF.